A 493-amino-acid chain; its full sequence is Occludin (493 aa).

Topologically, residues 1-47 are cytoplasmic; the sequence is MYSRPSNYAPSKDVYGGEMRSQPAYSYYPEEEIQHFYRWSSPPGIIK. The MARVEL domain maps to 41–250; the sequence is SPPGIIKIMS…IIFFAVKTRK (210 aa). The helical transmembrane segment at 48-70 threads the bilayer; that stretch reads IMSILIVVMCVGIFACVASTLPW. Residues 71–116 are Extracellular-facing; the sequence is DLDITGQSMGYGMGSGSYSGGYTGYGFGGSQMGLGFAYGGNYTDPR. Residues 117–141 traverse the membrane as a helical segment; it reads AAKGFILAMAAFCFIIGLVIFVMLV. Residues 142–151 are Cytoplasmic-facing; it reads TRTPLSTSRK. A helical transmembrane segment spans residues 152-176; the sequence is FYLIVIIVSAIIGGLVFIATIVYTV. The Extracellular segment spans residues 177–224; sequence GVNPVAQASGSAFYTQIVSICNQFYSPVQTGVFVNQYLYHYCVVEPQE. A disulfide bond links C197 and C218. Residues 225–246 traverse the membrane as a helical segment; it reads AIAIVLGFLIVVAFAIIIFFAV. Residues 247–493 lie on the Cytoplasmic side of the membrane; sequence KTRKKINQYG…IKQMVSNYDK (247 aa). A disordered region spans residues 334–407; that stretch reads YGMSPRHYSS…TKQRQEYKQE (74 aa). The segment covering 352–361 has biased composition (basic residues); the sequence is APPKKRPGKP. Residue T375 is modified to Phosphothreonine; by CK2; in vitro. Residue S379 is modified to Phosphoserine; by CK2; in vitro. Over residues 379-389 the composition is skewed to acidic residues; the sequence is SADELEDDSWD. In terms of domain architecture, OCEL spans 386–493; the sequence is DSWDSEYPPI…IKQMVSNYDK (108 aa). The stretch at 396-428 forms a coiled coil; sequence TQTKQRQEYKQEFASDLHEYKRLQAELDELSKI.

The protein belongs to the ELL/occludin family. In terms of assembly, interacts in vitro with cingulin, possibly directly. Interacts with ZO-1. Post-translationally, phosphorylated. As to expression, localized at tight junctions of both epithelial and endothelial cells.

It localises to the cell membrane. Its subcellular location is the cell junction. The protein localises to the tight junction. Probably plays a role in the formation and regulation of the tight junction (TJ) paracellular permeability barrier. In Xenopus laevis (African clawed frog), this protein is Occludin (ocln).